Here is a 137-residue protein sequence, read N- to C-terminus: Large ribosomal subunit protein bL17 (137 aa).

It belongs to the bacterial ribosomal protein bL17 family. Part of the 50S ribosomal subunit. Contacts protein L32.

This chain is Large ribosomal subunit protein bL17, found in Bradyrhizobium sp. (strain ORS 278).